The chain runs to 265 residues: MTKERSRAAKRSEEELLDIKQAASLLNVSEASLRRWTDSGKLPCYRVGDQRARRFRREDLVAFVSVSQETASPAQGADRPDSVKNAAKTQVAGMDIAYHDHICAIYGRPAGRLKLSVPLLREGLKAGDICFLNATQPGKAHILKVLREVYPDVHKAIKDGQLIFPALKRNKAEMLDQLEEMFLKATYSGEQKLRLVGDMEWALSVDWSEQEVYEYELEYNNTLGHRFPIISLCQYDVRVFSSKGILDALKSHEDTYKYPLRDCCI.

The H-T-H motif DNA-binding region spans 17-36; sequence LDIKQAASLLNVSEASLRRW.

As to quaternary structure, monomer.

In terms of biological role, transcriptional repressor of the dcmA gene and of its own gene. This chain is Transcriptional repressor DcmR (dcmR), found in Methylorubrum extorquens (strain DSM 6343 / CIP 106787 / DM4) (Methylobacterium extorquens).